The chain runs to 141 residues: Acetyltransferase YpeA (141 aa).

The N-acetyltransferase domain maps to 1-141 (MEIRVFRQED…GKRLIEDEEY (141 aa)).

This sequence belongs to the acetyltransferase family. YpeA subfamily.

In Shigella boydii serotype 4 (strain Sb227), this protein is Acetyltransferase YpeA.